Consider the following 629-residue polypeptide: tRNA uridine 5-carboxymethylaminomethyl modification enzyme MnmG (629 aa).

Residues 13–18, Val125, and Ser180 contribute to the FAD site; that span reads GGGHAG. 273 to 287 serves as a coordination point for NAD(+); sequence GPRYCPSIEDKVMRF. Gln370 serves as a coordination point for FAD.

This sequence belongs to the MnmG family. Homodimer. Heterotetramer of two MnmE and two MnmG subunits. It depends on FAD as a cofactor.

It is found in the cytoplasm. Functionally, NAD-binding protein involved in the addition of a carboxymethylaminomethyl (cmnm) group at the wobble position (U34) of certain tRNAs, forming tRNA-cmnm(5)s(2)U34. This is tRNA uridine 5-carboxymethylaminomethyl modification enzyme MnmG from Shigella dysenteriae serotype 1 (strain Sd197).